Consider the following 72-residue polypeptide: Large ribosomal subunit protein uL29 (72 aa).

It belongs to the universal ribosomal protein uL29 family.

In Microcystis aeruginosa (strain NIES-843 / IAM M-2473), this protein is Large ribosomal subunit protein uL29.